The sequence spans 276 residues: Glutamate 5-kinase (276 aa).

Lysine 14 serves as a coordination point for ATP. Positions 54, 141, and 157 each coordinate substrate. ATP-binding positions include 177–178 (SD) and 219–225 (TGGMLTK).

It belongs to the glutamate 5-kinase family.

Its subcellular location is the cytoplasm. It catalyses the reaction L-glutamate + ATP = L-glutamyl 5-phosphate + ADP. It participates in amino-acid biosynthesis; L-proline biosynthesis; L-glutamate 5-semialdehyde from L-glutamate: step 1/2. Functionally, catalyzes the transfer of a phosphate group to glutamate to form L-glutamate 5-phosphate. This is Glutamate 5-kinase from Listeria welshimeri serovar 6b (strain ATCC 35897 / DSM 20650 / CCUG 15529 / CIP 8149 / NCTC 11857 / SLCC 5334 / V8).